The chain runs to 159 residues: Transmembrane protein 42 (159 aa).

Transmembrane regions (helical) follow at residues 37–57 (FWGVFNCLCAGSFGALAAASA), 59–79 (LAFGSEVSMGLCVLGIIVMAS), 100–120 (IASVTVTFSNILSSAFLGYVL), and 124–144 (CQEVLWWGGVFLILCGLTLIH).

The protein resides in the membrane. In Pongo abelii (Sumatran orangutan), this protein is Transmembrane protein 42 (TMEM42).